The primary structure comprises 591 residues: Adenine deaminase (591 aa).

The protein belongs to the metallo-dependent hydrolases superfamily. Adenine deaminase family. Homodimer. Mn(2+) is required as a cofactor.

It catalyses the reaction adenine + H2O + H(+) = hypoxanthine + NH4(+). The sequence is that of Adenine deaminase from Edwardsiella ictaluri (strain 93-146).